Reading from the N-terminus, the 313-residue chain is Methionyl-tRNA formyltransferase (313 aa).

Position 109–112 (109–112) interacts with (6S)-5,6,7,8-tetrahydrofolate; that stretch reads SLLP.

The protein belongs to the Fmt family.

It catalyses the reaction L-methionyl-tRNA(fMet) + (6R)-10-formyltetrahydrofolate = N-formyl-L-methionyl-tRNA(fMet) + (6S)-5,6,7,8-tetrahydrofolate + H(+). Its function is as follows. Attaches a formyl group to the free amino group of methionyl-tRNA(fMet). The formyl group appears to play a dual role in the initiator identity of N-formylmethionyl-tRNA by promoting its recognition by IF2 and preventing the misappropriation of this tRNA by the elongation apparatus. The chain is Methionyl-tRNA formyltransferase from Thermotoga maritima (strain ATCC 43589 / DSM 3109 / JCM 10099 / NBRC 100826 / MSB8).